Here is a 626-residue protein sequence, read N- to C-terminus: Chaperone protein HtpG (626 aa).

Positions 1–341 (METKQFKAES…SEDLSLNISR (341 aa)) are a; substrate-binding. Residues 342–552 (EILQHDRQLK…EGELSIEMEK (211 aa)) are b. The tract at residues 490–509 (DLGIEGEEKENTSSSDDKEN) is disordered. Residues 498 to 509 (KENTSSSDDKEN) are compositionally biased toward basic and acidic residues. The segment at 553–626 (VLNAMPNNQN…FTNNICKIMK (74 aa)) is c.

The protein belongs to the heat shock protein 90 family. In terms of assembly, homodimer.

The protein localises to the cytoplasm. In terms of biological role, molecular chaperone. Has ATPase activity. This chain is Chaperone protein HtpG, found in Clostridium botulinum (strain Loch Maree / Type A3).